Reading from the N-terminus, the 631-residue chain is Guanylate-binding protein 4 (631 aa).

The region spanning Ser-33–Lys-283 is the GB1/RHD3-type G domain. GTP is bound by residues Gly-43–Ser-50 and Asp-103–Leu-107. Residues Ile-492–Asn-592 are a coiled coil.

This sequence belongs to the TRAFAC class dynamin-like GTPase superfamily. GB1/RHD3 GTPase family. GB1 subfamily. Heterodimer with other family members, including GBP1, GBP2 and GBP5. Dimerization regulates subcellular location. Interacts with IRF7; preventing interaction between TRAF6 and IRF7, resulting in impaired TRAF6-mediated IRF7 ubiquitination. As to expression, mainly expressed in organs of the immune system, such as spleen and lymph nodes.

Its subcellular location is the golgi apparatus membrane. It localises to the cytoplasm. The protein resides in the nucleus. The protein localises to the perinuclear region. It carries out the reaction GTP + H2O = GDP + phosphate + H(+). Interferon (IFN)-inducible GTPase that plays important roles in innate immunity against a diverse range of bacterial, viral and protozoan pathogens. Negatively regulates the antiviral response by inhibiting activation of IRF7 transcription factor. The protein is Guanylate-binding protein 4 of Mus musculus (Mouse).